Reading from the N-terminus, the 551-residue chain is Calnexin homolog (551 aa).

A signal peptide spans 1–26 (MVDRKEIPLAMGLLAVLLFFVASSSS). The Lumenal segment spans residues 27–480 (FHLVRASDEV…EKGEKQPNLT (454 aa)). Ca(2+)-binding residues include Ser44 and Asp75. Cysteines 118 and 153 form a disulfide. Positions 122 and 124 each coordinate an alpha-D-glucoside. Asn140 is a glycosylation site (N-linked (GlcNAc...) asparagine). Tyr144 and Asp151 together coordinate an alpha-D-glucoside. Residues 226–330 (ALIPSKTIPD…CGEWKRPTKS (105 aa)) form a disordered region. The tract at residues 233–364 (IPDPDDKKPE…QEIPNPEYFE (132 aa)) is p domain (Extended arm). Composition is skewed to basic and acidic residues over residues 234–269 (PDPD…PREI) and 276–295 (KPEP…AKPE). Repeat copies occupy residues 235 to 246 (DPDDKKPEDWDE), 252 to 263 (DPEAVKPEDWDE), 271 to 282 (DEEAEKPEPWLD), 289 to 299 (DPEAKPEDWDD), and 303 to 313 (GEWEAPKIENP). 4 X approximate repeats stretches follow at residues 235–299 (DPDD…DWDD) and 303–360 (GEWE…IPNP). A compositionally biased stretch (acidic residues) spans 296–305 (DWDDEEDGEW). A disulfide bridge links Cys315 with Cys321. 3 consecutive repeat copies span residues 322-332 (GEWKRPTKSNP), 336-346 (GKWSAPYIDNP), and 350-360 (GIWKPQEIPNP). Glu379 lines the an alpha-D-glucoside pocket. Asp390 provides a ligand contact to Ca(2+). N-linked (GlcNAc...) asparagine glycosylation occurs at Asn478. A helical membrane pass occupies residues 481-501 (IGIIVSVVIVFVSIFFRLIFG). At 502–551 (GKKPANVEANVEKKKTNTETTSKQDGGEKEDNKEKEETANPPRRRPKRDN) the chain is on the cytoplasmic side. A disordered region spans residues 510–551 (ANVEKKKTNTETTSKQDGGEKEDNKEKEETANPPRRRPKRDN). Basic and acidic residues predominate over residues 526–539 (DGGEKEDNKEKEET).

The protein belongs to the calreticulin family. In vegetative and flowering tissues.

The protein localises to the endoplasmic reticulum membrane. In terms of biological role, calcium-binding protein that interacts with newly synthesized monoglucosylated glycoproteins in the endoplasmic reticulum. It may act in assisting protein assembly and/or in the retention within the ER of unassembled protein subunits. It seems to play a major role in the quality control apparatus of the ER by the retention of incorrectly folded proteins. This is Calnexin homolog from Pisum sativum (Garden pea).